We begin with the raw amino-acid sequence, 233 residues long: 2-C-methyl-D-erythritol 4-phosphate cytidylyltransferase (233 aa).

The protein belongs to the IspD/TarI cytidylyltransferase family. IspD subfamily.

The enzyme catalyses 2-C-methyl-D-erythritol 4-phosphate + CTP + H(+) = 4-CDP-2-C-methyl-D-erythritol + diphosphate. It participates in isoprenoid biosynthesis; isopentenyl diphosphate biosynthesis via DXP pathway; isopentenyl diphosphate from 1-deoxy-D-xylulose 5-phosphate: step 2/6. In terms of biological role, catalyzes the formation of 4-diphosphocytidyl-2-C-methyl-D-erythritol from CTP and 2-C-methyl-D-erythritol 4-phosphate (MEP). The sequence is that of 2-C-methyl-D-erythritol 4-phosphate cytidylyltransferase from Gloeobacter violaceus (strain ATCC 29082 / PCC 7421).